The following is a 784-amino-acid chain: Toll-like receptor 2 (784 aa).

An N-terminal signal peptide occupies residues 1–20 (MPRALWTAWVWAVISVFTEG). The Extracellular segment spans residues 21-587 (ASDQASSLSC…ARLSLSECHR (567 aa)). A disulfide bridge connects residues C30 and C36. 19 LRR repeats span residues 54–77 (VKSLDLSDNEITYVGNRDLQRCVN), 78–101 (LKTLRLGANEIHTVEEDSFFHLRN), 102–125 (LEYLDLSYNRLSNLSSSWFRSLYV), 126–150 (LKFLNLLGNLYKTLGETSLFSHLPN), 151–175 (LRTLKVGNSNSFTQIHEKDFTGLTF), 176–199 (LEELEISAQNLQLYVPKSLKSIQN), 200–223 (ISHLILHLRQPVLLLDILIDIVSS), 224–250 (LDYLELRDTNLHTFYFSEASISEINTS), 251–278 (VKKLTFRNVQFTDDSFVEVVKLFNYVSG), 279–308 (ILEVEFDDCTHDGVGDFTALTLNRIRYLGN), 309–337 (VETLTIRKLHIPQFFLFYDLSSIYPLTGK), 338–361 (VKRVTIENSKVFLVPCLLSQHLKS), 362–388 (LEYLDLSENLMSEETLKNSACEHAWPV), 389–414 (LQTLVLRQNRLKSLEKTGELLLTLKN), 415–437 (LNNLDISKNNFLSMPETCQWPGK), 438–457 (MKQLNLSSTRIHSLTQCLPQ), 458–478 (TLEILDVSNNNLDSFSLILPQ), 479–500 (LKELYISRNKLKTLPDASFLPV), and 501–524 (LSVMRISGNIINTFSKEQLDSFPQ). Residue N114 is glycosylated (N-linked (GlcNAc...) asparagine). N199 carries N-linked (GlcNAc...) asparagine glycosylation. N248 carries an N-linked (GlcNAc...) asparagine glycan. C353 and C382 are disulfide-bonded. A disulfide bridge connects residues C432 and C454. An N-linked (GlcNAc...) asparagine glycan is attached at N442. The LRRCT domain maps to 525 to 579 (LKALEAGGNNFICSCDFLSFAQGQQALARVLVDWPDGYRCDAPSHVRGQRVQDAR). Residues 588-608 (AAVVSAVCCALFLLLLLTGVL) form a helical membrane-spanning segment. At 609–784 (CHRFHGLWYM…WLNLRAAIRS (176 aa)) the chain is on the cytoplasmic side. One can recognise a TIR domain in the interval 639 to 782 (LCYDAFVSYS…AFWLNLRAAI (144 aa)). K754 is covalently cross-linked (Glycyl lysine isopeptide (Lys-Gly) (interchain with G-Cter in ubiquitin)). Residues 761 to 778 (YLEWPTDETHREAFWLNL) carry the ATG16L1-binding motif motif.

It belongs to the Toll-like receptor family. As to quaternary structure, interacts with LY96, TLR1 and TLR6 (via extracellular domain). TLR2 seems to exist in heterodimers with either TLR1 or TLR6 before stimulation by the ligand. The heterodimers form bigger oligomers in response to their corresponding ligands as well as further heterotypic associations with other receptors such as CD14 and/or CD36. Binds MYD88 (via TIR domain). Interacts with TICAM1. Interacts with CNPY3. Interacts with ATG16L1. Interacts with PPP1R11. Interacts with TICAM2. Interacts with TIRAP. In terms of processing, ubiquitinated at Lys-754 by PPP1R11, leading to its degradation. Deubiquitinated by USP2. Glycosylation of Asn-442 is critical for secretion of the N-terminal ectodomain of TLR2.

It is found in the membrane. The protein localises to the cytoplasmic vesicle. The protein resides in the phagosome membrane. Its subcellular location is the membrane raft. Functionally, cooperates with LY96 to mediate the innate immune response to bacterial lipoproteins and other microbial cell wall components. Cooperates with TLR1 or TLR6 to mediate the innate immune response to bacterial lipoproteins or lipopeptides. Acts via MYD88 and TRAF6, leading to NF-kappa-B activation, cytokine secretion and the inflammatory response. May also promote apoptosis in response to lipoproteins. Forms activation clusters composed of several receptors depending on the ligand, these clusters trigger signaling from the cell surface and subsequently are targeted to the Golgi in a lipid-raft dependent pathway. Forms the cluster TLR2:TLR6:CD14:CD36 in response to diacylated lipopeptides and TLR2:TLR1:CD14 in response to triacylated lipopeptides. The chain is Toll-like receptor 2 (TLR2) from Ovis aries (Sheep).